The following is a 456-amino-acid chain: MTHQGIGCLVKWLYLVLIVHTLLCIGQLECRQQHHNRNNNNNNRRADSSSSEEGHGNTSDGLDNFADQDASFVGHGHQPRRGQRKKQQGGGGGGSGGGGGNGGGGGSRHNRNEESGISLWINEQQLKMLTALYFPQGYSERLYAIHNSRVTNDLRDTTLYNFLVIPSEVNYVNFTWKSGRRKYFYDFDRLQTMDESILKAPTLSIRKSGRIPQEQKNFSIFLPCTGNSSGTASFNVGLKIQTRHNKPLSGTPIRLNFKKECAHRGVYDIDASNPTSLTTLQECSLKCGKNGYCNEHHICKCNVGYTGQYCETAFCFPQCLNGGNCTAPSVCTCPEGYQGTQCEGGICKDKCLNGGKCIQKDKCQCSKGYYGLRCEYSKCVIPCKNEGRCIGNNLCRCPNGLRGDHCEIGRKQRSICKCRNGTCVSHKHCKCHPGFYGRHCNGRKRRHVHRNDDSKF.

The first 30 residues, 1 to 30 (MTHQGIGCLVKWLYLVLIVHTLLCIGQLEC), serve as a signal peptide directing secretion. Residues 34–112 (HHNRNNNNNN…GGGGSRHNRN (79 aa)) are disordered. The segment covering 44 to 55 (RRADSSSSEEGH) has biased composition (basic and acidic residues). Asn-57 carries an N-linked (GlcNAc...) asparagine glycan. The span at 77–87 (HQPRRGQRKKQ) shows a compositional bias: basic residues. Gly residues predominate over residues 88–107 (QGGGGGGSGGGGGNGGGGGS). Residues 119–261 (LWINEQQLKM…PIRLNFKKEC (143 aa)) form the WIF domain. Residues Asn-173, Asn-217, and Asn-227 are each glycosylated (N-linked (GlcNAc...) asparagine). Disulfide bonds link Cys-224-Cys-261, Cys-283-Cys-293, Cys-287-Cys-299, Cys-301-Cys-310, Cys-315-Cys-325, Cys-319-Cys-331, Cys-333-Cys-342, Cys-347-Cys-357, Cys-351-Cys-363, Cys-365-Cys-374, Cys-379-Cys-389, Cys-383-Cys-395, Cys-397-Cys-406, Cys-416-Cys-423, Cys-418-Cys-429, and Cys-431-Cys-440. EGF-like domains follow at residues 279–311 (TLQE…QYCE), 315–342 (CFPQ…GTQC), 343–375 (EGGI…LRCE), 376–407 (YSKC…DHCE), and 412–441 (QRSI…RHCN). Asn-324 is a glycosylation site (N-linked (GlcNAc...) asparagine). Asn-420 is a glycosylation site (N-linked (GlcNAc...) asparagine).

As to quaternary structure, interacts with hh. At the blastoderm stage, it is ubiquitously expressed. As embryogenesis continues, it is expressed in the epidermis and central nervous system, this expression being segmentally modulated. Also highly expressed at the foregut and hindgut throughout embryogenesis. In third instar wing imaginal disks, it is highly expressed in the most anterior and posterior parts of the disk and weakly expressed at the antero/posterior (A/P) compartment border. In the leg disks and the antenna part of the eye-antennal imaginal disk it is also weakly expressed at the A/P compartment border. Weakly expressed in the morphogenetic furrow in the eye primordium.

Its subcellular location is the secreted. The protein resides in the extracellular space. It localises to the extracellular matrix. Functionally, required for normal accumulation and movement of lipid-modified hedgehog (hh) morphogen. May act by stabilizing the interaction between heparan sulfate proteoglycans (HSPGs) and hh, HSPGs being required for diffusion of hh morphogen. Not involved in wingless (wg) morphogen movement, suggesting that it may provide HSPG specificity for Hh. In Drosophila melanogaster (Fruit fly), this protein is Protein shifted (shf).